Reading from the N-terminus, the 132-residue chain is U11/U12 small nuclear ribonucleoprotein 25 kDa protein (132 aa).

Residues 41-132 (MTVRVCKMDG…VSFIKKLRQK (92 aa)) enclose the Ubiquitin-like domain.

In terms of assembly, component of the U11/U12 snRNPs that are part of the U12-type spliceosome.

Its subcellular location is the nucleus. This is U11/U12 small nuclear ribonucleoprotein 25 kDa protein (SNRNP25) from Homo sapiens (Human).